The sequence spans 2197 residues: Activating signal cointegrator 1 complex subunit 3 (2197 aa).

Serine 12 carries the post-translational modification Phosphoserine. 2 coiled-coil regions span residues 18 to 80 (KQDN…AKQI) and 328 to 356 (IQSE…KAGE). The Helicase ATP-binding 1 domain occupies 487–670 (DTAYNTNENM…FLHVNPYIGL (184 aa)). 500 to 507 (APTGAGKT) provides a ligand contact to ATP. Lysine 573 is subject to N6-acetyllysine. Residues 612–615 (DEVH) carry the DEVH box motif. Positions 697–915 (QLNNMDEVCY…GTVTNVEEAV (219 aa)) constitute a Helicase C-terminal 1 domain. The region spanning 979–1288 (STDLGRTASH…GAEAVCIINF (310 aa)) is the SEC63 1 domain. Residues 1337-1512 (HTLYHTDCNV…WLNIKQMGLF (176 aa)) enclose the Helicase ATP-binding 2 domain. Residue 1350–1357 (APTGSGKT) participates in ATP binding. The DEIH box signature appears at 1454 to 1457 (DEIH). Residues 1565-1739 (RMLSSMTKLE…VLSDHLNAEI (175 aa)) enclose the Helicase C-terminal 2 domain. The 364-residue stretch at 1812–2175 (PLTCGRIASY…YLGLDQQYDI (364 aa)) folds into the SEC63 2 domain.

The protein belongs to the helicase family. In terms of assembly, identified in the ASCC complex that contains ASCC1, ASCC2 and ASCC3. Functions as a scaffolding subunit that interacts directly with both ASCC1 and ASCC2. Interacts directly with ALKBH3, and thereby recruits ALKBH3 to the ASCC complex. Part of the ASC-1/TRIP4 complex, that contains TRIP4, ASCC1, ASCC2 and ASCC3. Part of the RQT (ribosome quality control trigger) complex, that contains ASCC2, ASCC3 and TRIP4. Associates with ribosomes; recruited to collided ribosomes. Interacts with ZCCHC4. Interacts with ZNF598. Interacts with RPS3.

Its subcellular location is the nucleus. It is found in the nucleus speckle. The protein localises to the cytoplasm. It localises to the cytosol. The catalysed reaction is Couples ATP hydrolysis with the unwinding of duplex DNA by translocating in the 3'-5' direction.. It catalyses the reaction ATP + H2O = ADP + phosphate + H(+). In terms of biological role, ATPase involved both in DNA repair and rescue of stalled ribosomes. 3'-5' DNA helicase involved in repair of alkylated DNA: promotes DNA unwinding to generate single-stranded substrate needed for ALKBH3, enabling ALKBH3 to process alkylated N3-methylcytosine (3mC) within double-stranded regions. Also involved in activation of the ribosome quality control (RQC) pathway, a pathway that degrades nascent peptide chains during problematic translation. Drives the splitting of stalled ribosomes that are ubiquitinated in a ZNF598-dependent manner, as part of the ribosome quality control trigger (RQT) complex. Part of the ASC-1 complex that enhances NF-kappa-B, SRF and AP1 transactivation. The protein is Activating signal cointegrator 1 complex subunit 3 (Ascc3) of Rattus norvegicus (Rat).